The chain runs to 249 residues: DNA polymerase sliding clamp 1 (249 aa).

The protein belongs to the PCNA family. As to quaternary structure, homotrimer. The subunits circularize to form a toroid; DNA passes through its center. Replication factor C (RFC) is required to load the toroid on the DNA.

Sliding clamp subunit that acts as a moving platform for DNA processing. Responsible for tethering the catalytic subunit of DNA polymerase and other proteins to DNA during high-speed replication. In Pyrobaculum aerophilum (strain ATCC 51768 / DSM 7523 / JCM 9630 / CIP 104966 / NBRC 100827 / IM2), this protein is DNA polymerase sliding clamp 1.